The sequence spans 374 residues: Large ribosomal subunit protein uL4 (374 aa).

Residues 336-355 (EKAMAKGMQNKKNREARHAA) form a disordered region.

It belongs to the universal ribosomal protein uL4 family.

This Trypanosoma brucei brucei protein is Large ribosomal subunit protein uL4 (RPL4).